Reading from the N-terminus, the 215-residue chain is FGFR1 oncogene partner 2 homolog (215 aa).

Residues 35–183 are a coiled coil; it reads LLNKRVEAMK…SGLRELLGIS (149 aa).

Belongs to the SIKE family.

The protein resides in the cytoplasm. This Danio rerio (Zebrafish) protein is FGFR1 oncogene partner 2 homolog (fgfr1op2).